We begin with the raw amino-acid sequence, 320 residues long: Putative malonate transporter (320 aa).

8 helical membrane passes run 1–21 (MAEI…GYLT), 32–52 (MGWL…FKLV), 65–85 (FILT…AIGL), 113–133 (GLAL…IFCF), 167–187 (IAFH…FLSF), 196–216 (LIDY…GVTL), 256–276 (IWVQ…VFVI), and 289–309 (ATIL…LYLI).

It belongs to the auxin efflux carrier (TC 2.A.69) family.

The protein resides in the cell membrane. The protein is Putative malonate transporter (mdcF) of Rhizobium meliloti (strain 1021) (Ensifer meliloti).